We begin with the raw amino-acid sequence, 52 residues long: MSEIKKALNTLEIEDFDAIEMVDVDAMPENEALEIMGASCTTCVCTCSCCTT.

A propeptide spanning residues Met1–Ala38 is cleaved from the precursor. Positions Ser39 to Cys40 form a cross-link, thiazole-4-carboxylic acid (Ser-Cys). The pyridine-2,5-dicarboxylic acid (Ser-Cys) (with S-48) cross-link spans Ser39–Cys47. A cross-link (pyridine-2,5-dicarboxylic acid (Ser-Ser) (with C-47)) is located at residues Ser39–Ser48. At Thr42 the chain carries (Z)-2,3-didehydrobutyrine. A cross-link (thiazole-4-carboxylic acid (Thr-Cys)) is located at residues Thr42 to Cys43. The residue at position 44 (Val44) is a 3-hydroxyvaline (Val); partial. Positions Val44–Cys45 form a cross-link, thiazole-4-carboxylic acid (Val-Cys). An O-methylthreonine; partial modification is found at Thr46. The segment at residues Thr46 to Cys47 is a cross-link (thiazole-4-carboxylic acid (Thr-Cys)). The thiazole-4-carboxylic acid (Ser-Cys) cross-link spans Ser48–Cys49. The segment at residues Cys49–Cys50 is a cross-link (thiazole-4-carboxylic acid (Cys-Cys)). Thr51 carries the (Z)-2,3-didehydrobutyrine modification. At Thr52 the chain carries 1-amino-2-propanone; alternate. A Decarboxylated threonine; alternate modification is found at Thr52.

It belongs to the thiocillin family. Post-translationally, maturation of thiazole and oxazole containing antibiotics involves the enzymatic condensation of a Cys, Ser or Thr with the alpha-carbonyl of the preceding amino acid to form a thioether or ether bond, then dehydration to form a double bond with the alpha-amino nitrogen. Thiazoline or oxazoline ring are dehydrogenated to form thiazole or oxazole rings. Maturation of pyridinyl containing antibiotics involves the cross-linking of a Ser and a Cys-Ser pair usually separated by 7 or 8 residues along the peptide chain. The Ser residues are dehydrated to didehydroalanines, then bonded between their beta carbons. The alpha carbonyl of the Cys condenses with alpha carbon of the first Ser to form a pyridinyl ring. The ring may be multiply dehydrogenated to form a pyridine ring with loss of the amino nitrogen of the first Ser. In terms of processing, the 8 possible modification isomers, differing in the presence of modifications at three positions, have been characterized in PubMed:19196969. Val-44 is modified to 3-hydroxyvaline in forms thiocillin I, thiocillin II, YM-266183, and YM-266184. Thr-46 is modified to O-methylthreonine in forms thiocillin II, thiocillin III, thiocillin IV, and YM-266184. Thr-52 is decarboxylated to (R)-1-aminopropan-2-ol in forms micrococcin P1, thiocillin I, thiocillin II, and thiocillin III. Thr-52 is decarboxylated and oxidized to 1-amino-2-propanone in forms micrococcin P2, YM-266183, YM-266184. and thiocillin IV. Post-translationally, the structure of 2,3-didehydrobutyrines is not discussed in PubMed:19196969. However, in Fig. 3 the residues are diagrammed as Z-isomers.

It is found in the secreted. Its function is as follows. Has bacteriocidal activity against Gram-positive bacteria, but not against Gram-negative bacteria. Inhibits bacterial protein biosynthesis by acting on the elongation factor Tu (EF-Tu). In Bacillus cereus (strain ATCC 14579 / DSM 31 / CCUG 7414 / JCM 2152 / NBRC 15305 / NCIMB 9373 / NCTC 2599 / NRRL B-3711), this protein is Thiocillin.